Reading from the N-terminus, the 450-residue chain is Signal recognition particle protein (450 aa).

Residues 107–114 (GLQGSGKT), 190–194 (DTAGR), and 248–251 (TKTD) contribute to the GTP site.

The protein belongs to the GTP-binding SRP family. SRP54 subfamily. As to quaternary structure, part of the signal recognition particle protein translocation system, which is composed of SRP and FtsY. SRP is a ribonucleoprotein composed of Ffh and a 4.5S RNA molecule.

Its subcellular location is the cytoplasm. It carries out the reaction GTP + H2O = GDP + phosphate + H(+). Its function is as follows. Involved in targeting and insertion of nascent membrane proteins into the cytoplasmic membrane. Binds to the hydrophobic signal sequence of the ribosome-nascent chain (RNC) as it emerges from the ribosomes. The SRP-RNC complex is then targeted to the cytoplasmic membrane where it interacts with the SRP receptor FtsY. Interaction with FtsY leads to the transfer of the RNC complex to the Sec translocase for insertion into the membrane, the hydrolysis of GTP by both Ffh and FtsY, and the dissociation of the SRP-FtsY complex into the individual components. This Buchnera aphidicola subsp. Baizongia pistaciae (strain Bp) protein is Signal recognition particle protein.